The sequence spans 128 residues: Sulfurtransferase TusD (128 aa).

Residue Cys78 is the Cysteine persulfide intermediate of the active site.

Belongs to the DsrE/TusD family. In terms of assembly, heterohexamer, formed by a dimer of trimers. The hexameric TusBCD complex contains 2 copies each of TusB, TusC and TusD. The TusBCD complex interacts with TusE.

Its subcellular location is the cytoplasm. Its function is as follows. Part of a sulfur-relay system required for 2-thiolation of 5-methylaminomethyl-2-thiouridine (mnm(5)s(2)U) at tRNA wobble positions. Accepts sulfur from TusA and transfers it in turn to TusE. The polypeptide is Sulfurtransferase TusD (Escherichia coli O7:K1 (strain IAI39 / ExPEC)).